The sequence spans 128 residues: Probable 4-amino-4-deoxy-L-arabinose-phosphoundecaprenol flippase subunit ArnF (128 aa).

The Cytoplasmic segment spans residues 1 to 2 (MG). The chain crosses the membrane as a helical span at residues 3 to 23 (LIWGLFSVIIASVAQLSLGFA). Residues 24-35 (ASHLPPMTHLWD) lie on the Periplasmic side of the membrane. Residues 36–56 (FIAALLAFGLDARILLLGLLG) form a helical membrane-spanning segment. Topologically, residues 57–76 (YLLSVFCWYKTLHKLALSKA) are cytoplasmic. Residues 77–97 (YALLSMSYVLVWIASMVLPGW) form a helical membrane-spanning segment. Over 98–100 (EGT) the chain is Periplasmic. Residues 101–121 (FSLKALLGVACIMSGLMLIFL) form a helical membrane-spanning segment. Over 122-128 (PMTKQRY) the chain is Cytoplasmic.

It belongs to the ArnF family. As to quaternary structure, heterodimer of ArnE and ArnF.

The protein localises to the cell inner membrane. The protein operates within bacterial outer membrane biogenesis; lipopolysaccharide biosynthesis. Functionally, translocates 4-amino-4-deoxy-L-arabinose-phosphoundecaprenol (alpha-L-Ara4N-phosphoundecaprenol) from the cytoplasmic to the periplasmic side of the inner membrane. This is Probable 4-amino-4-deoxy-L-arabinose-phosphoundecaprenol flippase subunit ArnF from Escherichia coli O9:H4 (strain HS).